The chain runs to 142 residues: Hemoglobin subunit beta-C (142 aa).

The 141-residue stretch at 2 to 142 (PNKALITGFW…VASALAHRYH (141 aa)) folds into the Globin domain. 2 residues coordinate heme b: His59 and His88.

The protein belongs to the globin family. Heterotetramer of two alpha chains and two beta chains. As to expression, red blood cells.

Functionally, involved in oxygen transport from the lung to the various peripheral tissues. This is Hemoglobin subunit beta-C (HBBC) from Ovis aries (Sheep).